We begin with the raw amino-acid sequence, 266 residues long: Cytosolic Fe-S cluster assembly factor Nubp2 homolog (266 aa).

An ATP-binding site is contributed by 14–21; that stretch reads GKGGVGKS. 2 residues coordinate [4Fe-4S] cluster: Cys188 and Cys191.

Belongs to the Mrp/NBP35 ATP-binding proteins family. Nubp2/CFD1 subfamily. As to quaternary structure, heterotetramer of 2 Nubp1 and 2 Nubp2 chains. [4Fe-4S] cluster serves as cofactor.

It is found in the cytoplasm. In terms of biological role, component of the cytosolic iron-sulfur (Fe/S) protein assembly (CIA) machinery. Required for maturation of extramitochondrial Fe-S proteins. The Nubp1-Nubp2 heterotetramer forms a Fe-S scaffold complex, mediating the de novo assembly of an Fe-S cluster and its transfer to target apoproteins. The chain is Cytosolic Fe-S cluster assembly factor Nubp2 homolog from Drosophila virilis (Fruit fly).